The sequence spans 458 residues: MAGSPSRAAGRRLQLPLLCLFLQGATAVLFAVFVRYNHKTDAALWHRSNHSNADNEFYFRYPSFQDVHAMVFVGFGFLMVFLQRYGFSSVGFTFLLAAFALQWSTLVQGFLHSFHGGHIHVGVESMINADFCAGAVLISFGAVLGKTGPTQLLLMALLEVVLFGINEFVLLHLLGVRDAGGSMTIHTFGAYFGLVLSRVLYRPQLEKSKHRQGSVYHSDLFAMIGTIFLWIFWPSFNAALTALGAGQHRTALNTYYSLAASTLGTFALSALVGEDGRLDMVHIQNAALAGGVVVGTSSEMMLTPFGALAAGFLAGTVSTLGYKFFTPILESKFKVQDTCGVHNLHGMPGVLGALLGVLVAGLATHEAYGDGLESVFPLIAEGQRSATSQAMHQLFGLFVTLMFASVGGGLGGLLLKLPFLDSPPDSQHYEDQVHWQVPGEHEDKAQRPLRVEEADTQA.

Residues 1 to 13 are Cytoplasmic-facing; it reads MAGSPSRAAGRRL. The helical transmembrane segment at 14 to 34 threads the bilayer; sequence QLPLLCLFLQGATAVLFAVFV. The Extracellular segment spans residues 35–61; that stretch reads RYNHKTDAALWHRSNHSNADNEFYFRY. N49 carries an N-linked (GlcNAc...) asparagine glycan. A helical transmembrane segment spans residues 62–82; it reads PSFQDVHAMVFVGFGFLMVFL. At 83 to 86 the chain is on the cytoplasmic side; it reads QRYG. A helical transmembrane segment spans residues 87 to 107; it reads FSSVGFTFLLAAFALQWSTLV. At 108 to 124 the chain is on the extracellular side; sequence QGFLHSFHGGHIHVGVE. Residues 125–145 traverse the membrane as a helical segment; sequence SMINADFCAGAVLISFGAVLG. At 146 to 149 the chain is on the cytoplasmic side; the sequence is KTGP. Residues 150–170 form a helical membrane-spanning segment; it reads TQLLLMALLEVVLFGINEFVL. Topologically, residues 171-178 are extracellular; it reads LHLLGVRD. The helical transmembrane segment at 179-201 threads the bilayer; the sequence is AGGSMTIHTFGAYFGLVLSRVLY. The Cytoplasmic segment spans residues 202–219; the sequence is RPQLEKSKHRQGSVYHSD. The chain crosses the membrane as a helical span at residues 220–240; sequence LFAMIGTIFLWIFWPSFNAAL. Residues 241-251 lie on the Extracellular side of the membrane; that stretch reads TALGAGQHRTA. A helical transmembrane segment spans residues 252 to 272; sequence LNTYYSLAASTLGTFALSALV. Residues 273 to 282 lie on the Cytoplasmic side of the membrane; it reads GEDGRLDMVH. A helical transmembrane segment spans residues 283–303; sequence IQNAALAGGVVVGTSSEMMLT. Position 304 (P304) is a topological domain, extracellular. The helical transmembrane segment at 305-325 threads the bilayer; it reads FGALAAGFLAGTVSTLGYKFF. Residues 326–346 lie on the Cytoplasmic side of the membrane; that stretch reads TPILESKFKVQDTCGVHNLHG. A helical transmembrane segment spans residues 347-367; sequence MPGVLGALLGVLVAGLATHEA. At 368–393 the chain is on the extracellular side; sequence YGDGLESVFPLIAEGQRSATSQAMHQ. The helical transmembrane segment at 394-414 threads the bilayer; the sequence is LFGLFVTLMFASVGGGLGGLL. The Cytoplasmic portion of the chain corresponds to 415-458; the sequence is LKLPFLDSPPDSQHYEDQVHWQVPGEHEDKAQRPLRVEEADTQA. Positions 416–424 are interaction with ANK3; that stretch reads KLPFLDSPP. A disordered region spans residues 436-458; it reads QVPGEHEDKAQRPLRVEEADTQA.

Belongs to the ammonium transporter (TC 2.A.49) family. Rh subfamily. As to quaternary structure, interacts (via C-terminus) with ANK2 and ANK3; required for targeting to the basolateral membrane. In terms of processing, N-glycosylated. Specifically expressed in kidney. Also detected in liver and ovary.

Its subcellular location is the cell membrane. The protein localises to the basolateral cell membrane. The enzyme catalyses NH4(+)(in) = NH4(+)(out). It catalyses the reaction methylamine(out) = methylamine(in). The catalysed reaction is CO2(out) = CO2(in). In terms of biological role, ammonium transporter involved in the maintenance of acid-base homeostasis. Transports ammonium and its related derivative methylammonium across the basolateral plasma membrane of epithelial cells likely contributing to renal transepithelial ammonia transport and ammonia metabolism. May transport either NH4(+) or NH3 ammonia species predominantly mediating an electrogenic NH4(+) transport. May act as a CO2 channel providing for renal acid secretion. This Homo sapiens (Human) protein is Ammonium transporter Rh type B.